Consider the following 103-residue polypeptide: Pyrimidine/purine nucleoside phosphorylase (103 aa).

Belongs to the nucleoside phosphorylase PpnP family.

It catalyses the reaction a purine D-ribonucleoside + phosphate = a purine nucleobase + alpha-D-ribose 1-phosphate. The enzyme catalyses adenosine + phosphate = alpha-D-ribose 1-phosphate + adenine. It carries out the reaction cytidine + phosphate = cytosine + alpha-D-ribose 1-phosphate. The catalysed reaction is guanosine + phosphate = alpha-D-ribose 1-phosphate + guanine. It catalyses the reaction inosine + phosphate = alpha-D-ribose 1-phosphate + hypoxanthine. The enzyme catalyses thymidine + phosphate = 2-deoxy-alpha-D-ribose 1-phosphate + thymine. It carries out the reaction uridine + phosphate = alpha-D-ribose 1-phosphate + uracil. The catalysed reaction is xanthosine + phosphate = alpha-D-ribose 1-phosphate + xanthine. Catalyzes the phosphorolysis of diverse nucleosides, yielding D-ribose 1-phosphate and the respective free bases. Can use uridine, adenosine, guanosine, cytidine, thymidine, inosine and xanthosine as substrates. Also catalyzes the reverse reactions. The sequence is that of Pyrimidine/purine nucleoside phosphorylase from Methylobacillus flagellatus (strain ATCC 51484 / DSM 6875 / VKM B-1610 / KT).